The following is a 234-amino-acid chain: Putative N-acetylmannosamine-6-phosphate 2-epimerase (234 aa).

It belongs to the NanE family.

The catalysed reaction is an N-acyl-D-glucosamine 6-phosphate = an N-acyl-D-mannosamine 6-phosphate. Its pathway is amino-sugar metabolism; N-acetylneuraminate degradation; D-fructose 6-phosphate from N-acetylneuraminate: step 3/5. Its function is as follows. Converts N-acetylmannosamine-6-phosphate (ManNAc-6-P) to N-acetylglucosamine-6-phosphate (GlcNAc-6-P). This is Putative N-acetylmannosamine-6-phosphate 2-epimerase from Klebsiella pneumoniae subsp. pneumoniae (strain ATCC 700721 / MGH 78578).